The primary structure comprises 247 residues: ATP synthase subunit a, chloroplastic (247 aa).

The next 5 helical transmembrane spans lie at 38-58 (QVLI…LIAV), 95-115 (VPFI…GALL), 134-154 (INTT…AGLS), 199-219 (LVVV…VMFL), and 220-240 (GLFT…AYIG).

It belongs to the ATPase A chain family. In terms of assembly, F-type ATPases have 2 components, CF(1) - the catalytic core - and CF(0) - the membrane proton channel. CF(1) has five subunits: alpha(3), beta(3), gamma(1), delta(1), epsilon(1). CF(0) has four main subunits: a, b, b' and c.

Its subcellular location is the plastid. The protein localises to the chloroplast thylakoid membrane. In terms of biological role, key component of the proton channel; it plays a direct role in the translocation of protons across the membrane. The polypeptide is ATP synthase subunit a, chloroplastic (Brachypodium distachyon (Purple false brome)).